We begin with the raw amino-acid sequence, 51 residues long: MRDKIKLVSTAGTGHYYTTDKNKRNTPHKLEFRKYDPVVRKHVLYREAKIK.

Belongs to the bacterial ribosomal protein bL33 family.

This is Large ribosomal subunit protein bL33 from Alkalilimnicola ehrlichii (strain ATCC BAA-1101 / DSM 17681 / MLHE-1).